The sequence spans 417 residues: D-amino acid dehydrogenase (417 aa).

3-17 (VIVIGSGVIGLTSAW) lines the FAD pocket.

This sequence belongs to the DadA oxidoreductase family. It depends on FAD as a cofactor.

It catalyses the reaction a D-alpha-amino acid + A + H2O = a 2-oxocarboxylate + AH2 + NH4(+). Its pathway is amino-acid degradation; D-alanine degradation; NH(3) and pyruvate from D-alanine: step 1/1. Oxidative deamination of D-amino acids. This Vibrio atlanticus (strain LGP32) (Vibrio splendidus (strain Mel32)) protein is D-amino acid dehydrogenase.